We begin with the raw amino-acid sequence, 347 residues long: Ceramide very long chain fatty acid hydroxylase scs7 (347 aa).

The Cytoplasmic portion of the chain corresponds to 1 to 156 (MASVTSEKCV…GNFLEPLTKT (156 aa)). A helical membrane pass occupies residues 157–177 (PWYMIPLIWVPCVTYGFLYAC). Residue threonine 178 is a topological domain, lumenal. The helical transmembrane segment at 179–199 (GIPFSVAITFFIIGLFTWTLV) threads the bilayer. At 200–238 (EYTMHRFLFHLDEYTPDHPIFLTMHFAFHGCHHFLPADK) the chain is on the cytoplasmic side. Residues histidine 204, histidine 209, histidine 228, histidine 231, and histidine 232 each coordinate Zn(2+). The chain crosses the membrane as a helical span at residues 239–259 (YRLVMPPALFLIFATPWYHFI). A topological domain (lumenal) is located at residue glutamine 260. A helical transmembrane segment spans residues 261-281 (LVLPHYIGVAGFSGAILGYVF). The Cytoplasmic segment spans residues 282-347 (YDLTHYFLHH…EQGKISTKAK (66 aa)). The Zn(2+) site is built by histidine 286, histidine 290, histidine 306, histidine 309, and histidine 310.

The protein belongs to the sterol desaturase family. SCS7 subfamily. Zn(2+) is required as a cofactor.

It is found in the endoplasmic reticulum membrane. It participates in sphingolipid metabolism. In terms of biological role, ceramide hydroxylase involved in the hydroxylation of sphingolipid-associated very long chain fatty acids. Postulated to hydroxylate the very long chain fatty acid of dihydroceramides and phytoceramides at C-2. The chain is Ceramide very long chain fatty acid hydroxylase scs7 from Schizosaccharomyces pombe (strain 972 / ATCC 24843) (Fission yeast).